The following is a 387-amino-acid chain: Anhydro-N-acetylmuramic acid kinase (387 aa).

17–24 (GTSMDGVD) serves as a coordination point for ATP.

Belongs to the anhydro-N-acetylmuramic acid kinase family.

It catalyses the reaction 1,6-anhydro-N-acetyl-beta-muramate + ATP + H2O = N-acetyl-D-muramate 6-phosphate + ADP + H(+). It participates in amino-sugar metabolism; 1,6-anhydro-N-acetylmuramate degradation. The protein operates within cell wall biogenesis; peptidoglycan recycling. Catalyzes the specific phosphorylation of 1,6-anhydro-N-acetylmuramic acid (anhMurNAc) with the simultaneous cleavage of the 1,6-anhydro ring, generating MurNAc-6-P. Is required for the utilization of anhMurNAc either imported from the medium or derived from its own cell wall murein, and thus plays a role in cell wall recycling. The protein is Anhydro-N-acetylmuramic acid kinase of Burkholderia pseudomallei (strain 1710b).